The chain runs to 65 residues: MPKMKTNSGAKKRFALTGSGKIKRKHAFKSHILTKKTKKQKRNLTHTGLVASVDVSNVKQMLCMK.

Belongs to the bacterial ribosomal protein bL35 family.

The chain is Large ribosomal subunit protein bL35 from Parabacteroides distasonis (strain ATCC 8503 / DSM 20701 / CIP 104284 / JCM 5825 / NCTC 11152).